The chain runs to 293 residues: uncharacterized protein (293 aa).

Disordered stretches follow at residues 1–23 (MGWP…AQTD) and 52–83 (ELQS…SELS). Over residues 8–17 (KPEDSKEEHG) the composition is skewed to basic and acidic residues. Over residues 52 to 71 (ELQSYSHTSESPVETKTPTT) the composition is skewed to polar residues.

This is an uncharacterized protein from Mus musculus (Mouse).